The primary structure comprises 29 residues: Glucagon (29 aa).

The protein belongs to the glucagon family.

The protein resides in the secreted. In terms of biological role, promotes hydrolysis of glycogen and lipids, and raises the blood sugar level. The protein is Glucagon (gcg) of Torpedo marmorata (Marbled electric ray).